The sequence spans 367 residues: Heme A synthase (367 aa).

5 consecutive transmembrane segments (helical) span residues isoleucine 26 to alanine 46, leucine 111 to glycine 131, leucine 139 to valine 159, leucine 174 to glycine 194, and alanine 212 to leucine 232. Histidine 274 lines the heme pocket. The next 3 helical transmembrane spans lie at alanine 276–alanine 296, serine 305–leucine 325, and valine 327–isoleucine 347. Histidine 335 provides a ligand contact to heme.

Belongs to the COX15/CtaA family. Type 2 subfamily. As to quaternary structure, interacts with CtaB. Heme b is required as a cofactor.

The protein localises to the cell membrane. The catalysed reaction is Fe(II)-heme o + 2 A + H2O = Fe(II)-heme a + 2 AH2. Its pathway is porphyrin-containing compound metabolism; heme A biosynthesis; heme A from heme O: step 1/1. Its function is as follows. Catalyzes the conversion of heme O to heme A by two successive hydroxylations of the methyl group at C8. The first hydroxylation forms heme I, the second hydroxylation results in an unstable dihydroxymethyl group, which spontaneously dehydrates, resulting in the formyl group of heme A. This is Heme A synthase from Sinorhizobium fredii (strain NBRC 101917 / NGR234).